The sequence spans 570 residues: Adenine deaminase (570 aa).

It belongs to the metallo-dependent hydrolases superfamily. Adenine deaminase family. Mn(2+) serves as cofactor.

The enzyme catalyses adenine + H2O + H(+) = hypoxanthine + NH4(+). The polypeptide is Adenine deaminase (Petrotoga mobilis (strain DSM 10674 / SJ95)).